The following is a 411-amino-acid chain: MAKKKQAKQAEVNIGMVGHVDHGKTSLTKALTGVWTDRHSEELRRGISIRLGYADCEIRKCPQCGTYTTKPRCPNCLAETEFLRRVSFVDSPGHETLMATMLSGASLMDGAILVIAANEPCPQPQTKEHLMALEILGIDKIIIVQNKIDLVDEKQAEENYEQIKEFVKGTIAENAPIIPISAHHEANIDVLLKAIQDFIPTPKRDPDATPRMYVARSFDINKPGTEIKDLKGGVLGGAIIQGVFKVGDEIEIRPGIKVTEGNKTFWKPLTTKIVSLAAGNTILRKAHPGGLIGVGTTLDPYLTKSDALTGSVVGLPGTLPPIREKITIRANLLDRVVGTKEELKIEPLRTGEVLMLNIGTATTAGVITSARGDIADIKLKLPICAEIGDRVAISRRVGSRWRLIGYGTIEG.

Positions 9–203 constitute a tr-type G domain; it reads QAEVNIGMVG…AIQDFIPTPK (195 aa). The segment at 18–25 is G1; the sequence is GHVDHGKT. Mg(2+)-binding residues include aspartate 21, threonine 25, glycine 46, and serine 48. 21 to 26 is a GTP binding site; it reads DHGKTS. The interval 46–50 is G2; it reads GISIR. 4 residues coordinate Zn(2+): cysteine 61, cysteine 64, cysteine 73, and cysteine 76. A G3 region spans residues 90–93; the sequence is DSPG. GTP-binding positions include 146 to 149 and 181 to 183; these read NKID and SAH. Residues 146–149 are G4; that stretch reads NKID. Positions 181-183 are G5; the sequence is SAH.

Belongs to the TRAFAC class translation factor GTPase superfamily. Classic translation factor GTPase family. EIF2G subfamily. In terms of assembly, heterotrimer composed of an alpha, a beta and a gamma chain. The cofactor is Mg(2+).

The enzyme catalyses GTP + H2O = GDP + phosphate + H(+). Its function is as follows. eIF-2 functions in the early steps of protein synthesis by forming a ternary complex with GTP and initiator tRNA. The chain is Translation initiation factor 2 subunit gamma from Methanocaldococcus jannaschii (strain ATCC 43067 / DSM 2661 / JAL-1 / JCM 10045 / NBRC 100440) (Methanococcus jannaschii).